We begin with the raw amino-acid sequence, 30 residues long: Phospholipase A2 acanmyotoxin-2 (30 aa).

Ca(2+) contacts are provided by Y28 and G30.

Requires Ca(2+) as cofactor. Contains seven disulfide bonds. Expressed by the venom gland.

The protein localises to the secreted. It catalyses the reaction a 1,2-diacyl-sn-glycero-3-phosphocholine + H2O = a 1-acyl-sn-glycero-3-phosphocholine + a fatty acid + H(+). In terms of biological role, snake venom phospholipase A2 (PLA2) that has myotoxic activity but no significant neurotoxicity. PLA2 catalyzes the calcium-dependent hydrolysis of the 2-acyl groups in 3-sn-phosphoglycerides. This is Phospholipase A2 acanmyotoxin-2 from Acanthophis sp. (strain Seram) (Seram death adder).